A 59-amino-acid chain; its full sequence is Large ribosomal subunit protein bL32 (59 aa).

This sequence belongs to the bacterial ribosomal protein bL32 family.

The chain is Large ribosomal subunit protein bL32 from Thermodesulfovibrio yellowstonii (strain ATCC 51303 / DSM 11347 / YP87).